Here is a 126-residue protein sequence, read N- to C-terminus: MSWSDIINNNLIGSGNVSKAAILGFDGAVWAKSDNFNISVEEAVAAGKAFTSLDALLGTGLRLEGQKFLVLNADNDRIIGKQGGSGFFIYKTIQAVIISIYEKGLQPEMCSKTTGALADYFRSIKY.

Belongs to the profilin family. In terms of assembly, occurs in many kinds of cells as a complex with monomeric actin in a 1:1 ratio. In embryos, expression is specifically detected in body wall muscle cells. In adults, expression is localized to a striking dot-like fashion in body wall muscle.

Its subcellular location is the cytoplasm. The protein localises to the cytoskeleton. Its function is as follows. Binds to actin and affects the structure of the cytoskeleton. At high concentrations, profilin prevents the polymerization of actin, whereas it enhances it at low concentrations. By binding to PIP2, it inhibits the formation of IP3 and DG. Also binds to poly(L-proline) and phosphatidylinositol 4,5-bisphosphate micelles. This Caenorhabditis elegans protein is Profilin-3 (pfn-3).